Reading from the N-terminus, the 185-residue chain is Adenine phosphoribosyltransferase (185 aa).

The protein belongs to the purine/pyrimidine phosphoribosyltransferase family. In terms of assembly, homodimer.

The protein resides in the cytoplasm. It carries out the reaction AMP + diphosphate = 5-phospho-alpha-D-ribose 1-diphosphate + adenine. It participates in purine metabolism; AMP biosynthesis via salvage pathway; AMP from adenine: step 1/1. In terms of biological role, catalyzes a salvage reaction resulting in the formation of AMP, that is energically less costly than de novo synthesis. This is Adenine phosphoribosyltransferase from Corynebacterium glutamicum (strain ATCC 13032 / DSM 20300 / JCM 1318 / BCRC 11384 / CCUG 27702 / LMG 3730 / NBRC 12168 / NCIMB 10025 / NRRL B-2784 / 534).